Here is a 143-residue protein sequence, read N- to C-terminus: Acyl carrier protein 3, chloroplastic (143 aa).

The transit peptide at 1–60 (MATAAAGSSLICIKSASCSLNRAQVPSGLSSLRSVSLPISGKIFPSLRSSRGPLSFRVCC) directs the protein to the chloroplast. Residues 64 to 139 (QETVTRVCEI…DAADLIEKLV (76 aa)) form the Carrier domain. Ser-99 bears the O-(pantetheine 4'-phosphoryl)serine mark.

Belongs to the acyl carrier protein (ACP) family. Post-translationally, 4'-phosphopantetheine is transferred from CoA to a specific serine of apo-ACP by acpS. This modification is essential for activity because fatty acids are bound in thioester linkage to the sulfhydryl of the prosthetic group.

It localises to the plastid. The protein localises to the chloroplast. It participates in lipid metabolism; fatty acid biosynthesis. Carrier of the growing fatty acid chain in fatty acid biosynthesis. In Cuphea lanceolata (Cigar flower), this protein is Acyl carrier protein 3, chloroplastic (ACL1.3).